The chain runs to 305 residues: Superkiller complex protein 8 (305 aa).

7 WD repeats span residues A14 to Q57, G62 to S101, A104 to S143, T146 to E187, G188 to T227, G230 to T269, and D272 to M305.

The protein belongs to the SKI8 family. As to quaternary structure, component of the PAF1 complex. Component of the SKI complex.

The protein localises to the nucleus. It is found in the cytoplasm. Functionally, component of the PAF1 complex (PAF1C) which has multiple functions during transcription by RNA polymerase II and is implicated in regulation of development and maintenance of embryonic stem cell pluripotency. PAF1C associates with RNA polymerase II through interaction with POLR2A CTD non-phosphorylated and 'Ser-2'- and 'Ser-5'-phosphorylated forms and is involved in transcriptional elongation, acting both independently and synergistically with TCEA1 and in cooperation with the DSIF complex and HTATSF1. Also acts as a component of the SKI complex, a multiprotein complex that assists the RNA-degrading exosome during the mRNA decay and quality-control pathways. The SKI complex catalyzes mRNA extraction from 80S ribosomal complexes in the 3'-5' direction and channels mRNA to the cytosolic exosome for degradation. This Danio rerio (Zebrafish) protein is Superkiller complex protein 8 (skic8).